The chain runs to 339 residues: Probable G-protein coupled receptor 33 (339 aa).

Over 1–30 the chain is Extracellular; that stretch reads MDRVNSSGHVISVSPSLTNSTGVPTPAPKA. N-linked (GlcNAc...) asparagine glycosylation is found at Asn5 and Asn19. Residues 31–53 traverse the membrane as a helical segment; that stretch reads IIAAALFMSFIVGTISNGLYLWM. The Cytoplasmic segment spans residues 54-64; that stretch reads LKFKMQRTVNT. A helical transmembrane segment spans residues 65-86; it reads LLFFHLILSYFISTLILPFMAT. The Extracellular portion of the chain corresponds to 87–103; that stretch reads SFLQDNHWAFGSVLCKV. An intrachain disulfide couples Cys101 to Cys179. The chain crosses the membrane as a helical span at residues 104–124; sequence FNSTLSVSMFASVFFLSAISV. Residues 125 to 143 lie on the Cytoplasmic side of the membrane; that stretch reads DRYHLTLHPVWSQQHRTPR. Residues 144-165 form a helical membrane-spanning segment; that stretch reads WASRIALRIWILATILSIPYLV. The Extracellular segment spans residues 166–209; the sequence is FRETHDDHKGRIKCQNNYIVGTNWESSEHQTLGQWIHAACFGRR. Residues 210–230 traverse the membrane as a helical segment; the sequence is FLLGFLLPFLVIVFCYKRVAT. At 231 to 246 the chain is on the cytoplasmic side; that stretch reads KMKDKGLFKSSKPFKV. The helical transmembrane segment at 247–268 threads the bilayer; the sequence is MLTAVVSFFVCWMPYHVHSGLV. The Extracellular portion of the chain corresponds to 269–283; sequence LTKSQPLPSQLTLGL. Residues 284–303 traverse the membrane as a helical segment; it reads AVVTISFNTVVSPILYLFTG. The Cytoplasmic portion of the chain corresponds to 304–339; that stretch reads ENFEVFKKSILALFKSTFSDSSATERTQTLNSETEI.

It belongs to the G-protein coupled receptor 1 family.

The protein localises to the cell membrane. In terms of biological role, orphan receptor; could be a chemoattractant receptor. This is Probable G-protein coupled receptor 33 (Gpr33) from Rattus rattus (Black rat).